Reading from the N-terminus, the 757-residue chain is uncharacterized protein (757 aa).

Residues 640–709 enclose the S1 motif domain; that stretch reads GMILEGVVSN…ARKRIALTMR (70 aa). Residues 710–741 show a composition bias toward basic and acidic residues; that stretch reads LDDEPGGAKHKMPSENRSRERTAGRKPQRNDR. Residues 710-757 are disordered; it reads LDDEPGGAKHKMPSENRSRERTAGRKPQRNDRAPANSAMADAFAKLKR.

This is an uncharacterized protein from Neisseria meningitidis serogroup A / serotype 4A (strain DSM 15465 / Z2491).